Reading from the N-terminus, the 293-residue chain is UDP-3-O-acyl-N-acetylglucosamine deacetylase (293 aa).

Zn(2+) is bound by residues histidine 79, histidine 236, and aspartate 240. Catalysis depends on histidine 263, which acts as the Proton donor.

The protein belongs to the LpxC family. Requires Zn(2+) as cofactor.

The enzyme catalyses a UDP-3-O-[(3R)-3-hydroxyacyl]-N-acetyl-alpha-D-glucosamine + H2O = a UDP-3-O-[(3R)-3-hydroxyacyl]-alpha-D-glucosamine + acetate. It functions in the pathway glycolipid biosynthesis; lipid IV(A) biosynthesis; lipid IV(A) from (3R)-3-hydroxytetradecanoyl-[acyl-carrier-protein] and UDP-N-acetyl-alpha-D-glucosamine: step 2/6. In terms of biological role, catalyzes the hydrolysis of UDP-3-O-myristoyl-N-acetylglucosamine to form UDP-3-O-myristoylglucosamine and acetate, the committed step in lipid A biosynthesis. In Phenylobacterium zucineum (strain HLK1), this protein is UDP-3-O-acyl-N-acetylglucosamine deacetylase.